The chain runs to 413 residues: Serine/threonine-protein phosphatase 7 (413 aa).

Residues C28 and C67 are joined by a disulfide bond. Mn(2+)-binding residues include D84, H86, D113, and N145. The active-site Proton donor is the H146. The Mn(2+) site is built by H197 and H303. The tract at residues 391-413 is disordered; the sequence is NVIDSDDEMDKSAMDTNNEQPNS. A compositionally biased stretch (polar residues) spans 404–413; the sequence is MDTNNEQPNS.

This sequence belongs to the PPP phosphatase family. PP-7 subfamily. As to quaternary structure, monomer, homodimer, and heteromer. Interacts with calmodulin (CaM3 and CaM4) and HSFA1A/HSF1. It depends on Mn(2+) as a cofactor. As to expression, expressed in leaves, and, to a lower extent, in stems and flowers.

It localises to the nucleus. Its subcellular location is the nucleoplasm. It carries out the reaction O-phospho-L-seryl-[protein] + H2O = L-seryl-[protein] + phosphate. The enzyme catalyses O-phospho-L-threonyl-[protein] + H2O = L-threonyl-[protein] + phosphate. Its activity is regulated as follows. Inhibited by NaF and orthovanadate, as well as by divalent cations such as Ni(2+) and Zn(2+). Inhibited by polylysine with myelin basic protein as substrate, but activated by polylysine with pNPP as substrate. Reversibly regulated by redox agents. Inhibited by submillimolar Pi concentrations. Slightly repressed by calmodulin (CaM). Its function is as follows. Phosphatase active on para-nitrophenylphosphate (pNPP) and on various phosphoproteins such as myelin basic protein. Seems to act as a positive regulator of cryptochrome signaling involved in hypocotyl growth inhibition and cotyledon expansion under white and blue light conditions. Confers thermotolerance. Required for heat shock mediated-signaling pathway that leads to the expression of heat shock proteins (HSPs). The sequence is that of Serine/threonine-protein phosphatase 7 (PP7) from Arabidopsis thaliana (Mouse-ear cress).